A 27-amino-acid chain; its full sequence is Protein YqfI (27 aa).

The sequence is that of Protein YqfI from Escherichia coli (strain K12).